The following is a 519-amino-acid chain: Cytochrome P450 monooxygenase easM (519 aa).

A helical transmembrane segment spans residues 16-33; sequence VAPALFASSISVLFLILS. N-linked (GlcNAc...) asparagine glycans are attached at residues N50 and N353. A heme-binding site is contributed by C458.

This sequence belongs to the cytochrome P450 family. Requires heme as cofactor.

Its subcellular location is the membrane. It functions in the pathway alkaloid biosynthesis; ergot alkaloid biosynthesis. Cytochrome P450 monooxygenase; part of the gene cluster that mediates the biosynthesis of fumiclavanine C, a fungal ergot alkaloid. DmaW catalyzes the first step of ergot alkaloid biosynthesis by condensing dimethylallyl diphosphate (DMAP) and tryptophan to form 4-dimethylallyl-L-tryptophan. The second step is catalyzed by the methyltransferase easF that methylates 4-dimethylallyl-L-tryptophan in the presence of S-adenosyl-L-methionine, resulting in the formation of 4-dimethylallyl-L-abrine. The catalase easC and the FAD-dependent oxidoreductase easE then transform 4-dimethylallyl-L-abrine to chanoclavine-I which is further oxidized by EasD in the presence of NAD(+), resulting in the formation of chanoclavine-I aldehyde. EasA reduces chanoclavine-I aldehyde to dihydrochanoclavine-I aldehyde that spontaneously dehydrates to form 6,8-dimethyl-6,7-didehydroergoline. EasG then catalyzes the reduction of 6,8-dimethyl-6,7-didehydroergoline to form festuclavine. Hydrolysis of festuclavine by easM then leads to the formation of fumigaclavine B which is in turn acetylated by easN to fumigaclavine A. Finally, easL catalyzes the conversion of fumigaclavine A into fumigaclavine C by attaching a dimethylallyl moiety to C-2 of the indole nucleus. The protein is Cytochrome P450 monooxygenase easM of Aspergillus fumigatus (strain ATCC MYA-4609 / CBS 101355 / FGSC A1100 / Af293) (Neosartorya fumigata).